Consider the following 421-residue polypeptide: MKPLAYRMRPTKIEDIIGQQHLVAEDKIIGRMVQAKHLSSMILYGPPGIGKTSIATAIAGSTSIAFRKLNAVINNKKDMEIVAQEAKMSGQVILILDEVHRLDKGKQDFLLPYLENGMIILIGATTANPYHAINPAIRSRTQIFELEPLTPELIKQALERALHDEHRGLGTYSVSIDDQAMEHFAHGCGGDVRSALNALELAVLSTKESADGEIHITLETAEECLQKKSFSHDKDGDAHYDVLSAFQKSIRGSDANAALHYLARLIEAGDLESIARRLLVIAYEDIGLASPQAGPRVLNAIQTAERVGFPEARIPLANAVIELCLSPKSNSAILAIDEALADIRAGKIGDVPKHLKDAHYKGAQELGRGIDYKYPHNYDNGWVEQQYLPDPLKNKQYYKPKQTGKFESALKQVYDKLMKRK.

45 to 52 (GPPGIGKT) provides a ligand contact to ATP.

The protein belongs to the AAA ATPase family. RarA/MGS1/WRNIP1 subfamily. As to quaternary structure, homotetramer. Interacts with single-stranded binding protein SsbA. May interact with PriA.

The protein resides in the cytoplasm. Its subcellular location is the nucleoid. With respect to regulation, ssDNA-dependent ATP hydrolysis is stimulated by single-stranded binding protein SsbA but not by SsbB; in the presence of SsbB, ssDNA secondary structure is removed and RarA's ATPase activity is decreased. The C-terminal 9 residues of SsbA are sufficient to stimulate ATPase activity. Its function is as follows. Plays a role in recombination-dependent DNA replication. Positively affects the formation of RecA threads during response to DNA damage, directly or indirectly counteracting the negative RecA modulators RecX and RecU. Stabilizes a RecA-ssDNA complex. In vitro, in the presence of SsbA, inhibits PriA-dependent DNA replication restart of both leading and lagging strands; elongation is insensitive to RarA. Plays a role in response to DNA damage, localizes to the replication fork but also to DNA elsewhere in the cell. Probably required for repair of single-stranded nicks generated by H(2)O(2). Epistatic to RecA, partially represses deletions of the error-prone translesion DNA polymerases (dinB1 and dinB2), genetically interacts with replicative helicase loaders dnaB and dnaD. Epistatic to recF and recO mutations upon DNA damage. A DNA-dependent ATPase stimulated by hairpin structures in circular single-stranded (ss)DNA or ssDNA-dsDNA junctions, by blunt end and 5'-tailed dsDNA and by single-stranded binding protein SsbA protein bound to ssDNA. Preferentially binds ssDNA and replication-fork structures; SsbA stimulates binding to ssDNA. Addition of ATP to the protein has no visible effect in vitro. The protein is Replication-associated recombination protein A of Bacillus subtilis (strain 168).